We begin with the raw amino-acid sequence, 365 residues long: Glutamate 5-kinase 1 (365 aa).

Residue Lys-9 participates in ATP binding. Substrate is bound by residues Ser-49, Asp-136, and Asn-148. ATP contacts are provided by residues 168–169 (TD) and 210–216 (TGGMKSK). The 78-residue stretch at 276–353 (SGEIIIDAGA…DELDFEKTFE (78 aa)) folds into the PUA domain.

The protein belongs to the glutamate 5-kinase family.

The protein resides in the cytoplasm. The catalysed reaction is L-glutamate + ATP = L-glutamyl 5-phosphate + ADP. It participates in amino-acid biosynthesis; L-proline biosynthesis; L-glutamate 5-semialdehyde from L-glutamate: step 1/2. In terms of biological role, catalyzes the transfer of a phosphate group to glutamate to form L-glutamate 5-phosphate. In Bacillus subtilis (strain 168), this protein is Glutamate 5-kinase 1.